The sequence spans 313 residues: Homoserine O-acetyltransferase (313 aa).

Cysteine 142 serves as the catalytic Acyl-thioester intermediate. Substrate is bound by residues lysine 163 and serine 191. The active-site Proton acceptor is the histidine 234. The active site involves glutamate 236. Residue arginine 248 coordinates substrate.

It belongs to the MetA family.

It is found in the cytoplasm. It catalyses the reaction L-homoserine + acetyl-CoA = O-acetyl-L-homoserine + CoA. It functions in the pathway amino-acid biosynthesis; L-methionine biosynthesis via de novo pathway; O-acetyl-L-homoserine from L-homoserine: step 1/1. Functionally, transfers an acetyl group from acetyl-CoA to L-homoserine, forming acetyl-L-homoserine. This Streptococcus sanguinis (strain SK36) protein is Homoserine O-acetyltransferase.